The primary structure comprises 564 residues: Asparagine synthetase domain-containing protein CG17486 (564 aa).

C2 functions as the Nucleophile in the catalytic mechanism. Positions 2–180 (CGIFCSVVNN…PLGLFRVKLN (179 aa)) constitute a Glutamine amidotransferase type-2 domain. An Asparagine synthetase domain is found at 280 to 541 (PFCRLCMQKL…GLRDVVFLKK (262 aa)).

The sequence is that of Asparagine synthetase domain-containing protein CG17486 from Drosophila melanogaster (Fruit fly).